Consider the following 82-residue polypeptide: Penaeidin-3a (82 aa).

Positions Met-1–Gly-19 are cleaved as a signal peptide. A Pyrrolidone carboxylic acid modification is found at Gln-20. Intrachain disulfides connect Cys-51/Cys-66, Cys-55/Cys-73, and Cys-67/Cys-74. Residue Ser-81 is modified to Serine amide.

The N-terminus forms pyrrolidone carboxylic acid. In terms of tissue distribution, higher expression in hemocytes and to a lesser extent in heart, testis, gills, intestine, lymphoid organ and hepatopancreas. Traces in eyes and subcuticular epithelium. Not present in the brain.

It localises to the cytoplasmic granule. Functionally, antibacterial activity against M.luteus and E.coli bacteria. Antifungal activity against N.crassa and F.oxysporum. Presents chitin-binding activity. The polypeptide is Penaeidin-3a (Penaeus vannamei (Whiteleg shrimp)).